Here is a 217-residue protein sequence, read N- to C-terminus: MKFFVDTADVKEIRELNDLGLVDGVTTNPSLILKSGRDIIEVTKEICNIVKGPVSAEVAATEYEQMMKEAAVIARIADNICIKLPVTLDGLKACKALTSEGHKVNMTLCFSANQALLAAKAGATFISPFIGRLDDTGINGMELIAEIRTIYDNYDFRTEILAASVRTVNHVKEAALIGADVVTAPPATLKALVKHPLTYKGLETFLADWAKTGQKIA.

K83 serves as the catalytic Schiff-base intermediate with substrate.

The protein belongs to the transaldolase family. Type 3B subfamily.

It is found in the cytoplasm. It carries out the reaction D-sedoheptulose 7-phosphate + D-glyceraldehyde 3-phosphate = D-erythrose 4-phosphate + beta-D-fructose 6-phosphate. It participates in carbohydrate degradation; pentose phosphate pathway; D-glyceraldehyde 3-phosphate and beta-D-fructose 6-phosphate from D-ribose 5-phosphate and D-xylulose 5-phosphate (non-oxidative stage): step 2/3. Transaldolase is important for the balance of metabolites in the pentose-phosphate pathway. In Brucella melitensis biotype 1 (strain ATCC 23456 / CCUG 17765 / NCTC 10094 / 16M), this protein is Probable transaldolase.